The primary structure comprises 317 residues: Aspartate carbamoyltransferase catalytic subunit (317 aa).

Carbamoyl phosphate is bound by residues R65 and T66. K93 contributes to the L-aspartate binding site. 3 residues coordinate carbamoyl phosphate: R115, H145, and Q148. Residues R178 and R233 each coordinate L-aspartate. Residues G274 and P275 each coordinate carbamoyl phosphate.

The protein belongs to the aspartate/ornithine carbamoyltransferase superfamily. ATCase family. Heterododecamer (2C3:3R2) of six catalytic PyrB chains organized as two trimers (C3), and six regulatory PyrI chains organized as three dimers (R2).

It catalyses the reaction carbamoyl phosphate + L-aspartate = N-carbamoyl-L-aspartate + phosphate + H(+). Its pathway is pyrimidine metabolism; UMP biosynthesis via de novo pathway; (S)-dihydroorotate from bicarbonate: step 2/3. Its function is as follows. Catalyzes the condensation of carbamoyl phosphate and aspartate to form carbamoyl aspartate and inorganic phosphate, the committed step in the de novo pyrimidine nucleotide biosynthesis pathway. This chain is Aspartate carbamoyltransferase catalytic subunit, found in Bordetella parapertussis (strain 12822 / ATCC BAA-587 / NCTC 13253).